A 104-amino-acid chain; its full sequence is Guanyl-specific ribonuclease Ap1 (104 aa).

2 disulfide bridges follow: Cys2–Cys10 and Cys6–Cys103. His40 is a catalytic residue. Glu58 serves as the catalytic Proton acceptor. His92 serves as the catalytic Proton donor.

This sequence belongs to the ribonuclease N1/T1 family.

It is found in the secreted. It catalyses the reaction [RNA] containing guanosine + H2O = an [RNA fragment]-3'-guanosine-3'-phosphate + a 5'-hydroxy-ribonucleotide-3'-[RNA fragment].. The protein is Guanyl-specific ribonuclease Ap1 of Aspergillus pallidus.